The chain runs to 330 residues: Ketol-acid reductoisomerase (NADP(+)) (330 aa).

Residues 2–182 (VKVYYDADAN…GCTKAGVFET (181 aa)) enclose the KARI N-terminal Rossmann domain. NADP(+)-binding positions include 25 to 28 (YGSQ), Arg48, Ser51, and 83 to 86 (DEIQ). Residue His108 is part of the active site. Gly134 provides a ligand contact to NADP(+). The 146-residue stretch at 183–328 (SFREETETDL…ARLREMMPWL (146 aa)) folds into the KARI C-terminal knotted domain. Mg(2+)-binding residues include Asp191, Glu195, Glu227, and Glu231. A substrate-binding site is contributed by Ser252.

Belongs to the ketol-acid reductoisomerase family. The cofactor is Mg(2+).

The catalysed reaction is (2R)-2,3-dihydroxy-3-methylbutanoate + NADP(+) = (2S)-2-acetolactate + NADPH + H(+). It carries out the reaction (2R,3R)-2,3-dihydroxy-3-methylpentanoate + NADP(+) = (S)-2-ethyl-2-hydroxy-3-oxobutanoate + NADPH + H(+). It functions in the pathway amino-acid biosynthesis; L-isoleucine biosynthesis; L-isoleucine from 2-oxobutanoate: step 2/4. The protein operates within amino-acid biosynthesis; L-valine biosynthesis; L-valine from pyruvate: step 2/4. Involved in the biosynthesis of branched-chain amino acids (BCAA). Catalyzes an alkyl-migration followed by a ketol-acid reduction of (S)-2-acetolactate (S2AL) to yield (R)-2,3-dihydroxy-isovalerate. In the isomerase reaction, S2AL is rearranged via a Mg-dependent methyl migration to produce 3-hydroxy-3-methyl-2-ketobutyrate (HMKB). In the reductase reaction, this 2-ketoacid undergoes a metal-dependent reduction by NADPH to yield (R)-2,3-dihydroxy-isovalerate. The sequence is that of Ketol-acid reductoisomerase (NADP(+)) from Desulforamulus reducens (strain ATCC BAA-1160 / DSM 100696 / MI-1) (Desulfotomaculum reducens).